A 1083-amino-acid chain; its full sequence is FACT complex subunit spt16 (1083 aa).

The residue at position 437 (Ser-437) is a Phosphoserine. A coiled-coil region spans residues 466-504; sequence LESKLRNEINTEEKRKEHQRELAQQLNERAKDRLARQGN. Positions 923–1083 are disordered; sequence FEQGGWTFLD…NGHKSKKSRH (161 aa). The segment covering 935–987 has biased composition (acidic residues); it reads SGSEGENETAESEEDEAYNPTDAESDEESDEDSEYSEASEDSEESDEDLGSDE. Residues 988-1023 show a composition bias toward basic and acidic residues; it reads ESGKDWSDLEREAAEEDRNHDYAADDKPRNGKFDSK. Residues 1024–1033 are compositionally biased toward basic residues; sequence KHGKSSKHSP. The span at 1058-1076 shows a compositional bias: basic and acidic residues; that stretch reads SSKDKDRKRSRDDSRDNGH.

The protein belongs to the peptidase M24 family. SPT16 subfamily. As to quaternary structure, component of the FACT complex, a stable heterodimer of dre4/spt16 and Ssrp. Interacts with TRL/GAGA.

Its subcellular location is the nucleus. It is found in the chromosome. In terms of biological role, component of the FACT complex, a general chromatin factor that acts to reorganize nucleosomes. The FACT complex is involved in multiple processes that require DNA as a template such as mRNA elongation, DNA replication and DNA repair. During transcription elongation the FACT complex acts as a histone chaperone that both destabilizes and restores nucleosomal structure. It facilitates the passage of RNA polymerase II and transcription by promoting the dissociation of one histone H2A-H2B dimer from the nucleosome, then subsequently promotes the reestablishment of the nucleosome following the passage of RNA polymerase II. The FACT complex is required for expression of Hox genes. The protein is FACT complex subunit spt16 (dre4) of Drosophila melanogaster (Fruit fly).